Here is a 298-residue protein sequence, read N- to C-terminus: Cyclin-dependent kinase 2 (298 aa).

An N-acetylmethionine modification is found at methionine 1. Residues 4 to 286 enclose the Protein kinase domain; it reads FQKVEKIGEG…AKAALAHPFF (283 aa). Lysine 6 carries the N6-acetyllysine modification. ATP is bound at residue 10–18; sequence IGEGTYGVV. Threonine 14 is subject to Phosphothreonine. At tyrosine 15 the chain carries Phosphotyrosine; by WEE1. Tyrosine 19 is subject to Phosphotyrosine. Residues lysine 33, 81–83, and aspartate 86 each bind ATP; that span reads EFL. The active-site Proton acceptor is the aspartate 127. Residues 129 to 132 and aspartate 145 contribute to the ATP site; that span reads KPQN. Mg(2+) contacts are provided by asparagine 132 and aspartate 145. Threonine 160 is modified (phosphothreonine; by CAK and CCRK).

Belongs to the protein kinase superfamily. CMGC Ser/Thr protein kinase family. CDC2/CDKX subfamily. As to quaternary structure, found in a complex with CABLES1, CCNA1 and CCNE1. Interacts with CABLES1. Interacts with UHRF2. Part of a complex consisting of UHRF2, CDK2 and CCNE1. Interacts with the Speedy/Ringo proteins SPDYA and SPDYC. Interaction with SPDYA promotes kinase activation via a conformation change that alleviates obstruction of the substrate-binding cleft by the T-loop. Found in a complex with both SPDYA and CDKN1B/KIP1. Binds to RB1. Binds to CDK7. Binding to CDKN1A (p21) leads to CDK2/cyclin E inactivation at the G1-S phase DNA damage checkpoint, thereby arresting cells at the G1-S transition during DNA repair. Associated with PTPN6 and beta-catenin/CTNNB1. Interacts with CACUL1. May interact with CEP63. Interacts with ANKRD17. Interacts with CEBPA (when phosphorylated). Forms a ternary complex with CCNA2 and CDKN1B; CDKN1B inhibits the kinase activity of CDK2 through conformational rearrangements. Interacts with cyclins A, B1, B3, D, or E. Interacts with CDK2AP2. Mg(2+) serves as cofactor. Post-translationally, phosphorylated at Thr-160 by CDK7 in a CAK complex. Phosphorylation at Thr-160 promotes kinase activity, whereas phosphorylation at Tyr-15 by WEE1 reduces slightly kinase activity. Phosphorylated on Thr-14 and Tyr-15 during S and G2 phases before being dephosphorylated by CDC25A. Nitrosylated after treatment with nitric oxide (DETA-NO).

It is found in the cytoplasm. Its subcellular location is the cytoskeleton. The protein localises to the microtubule organizing center. It localises to the centrosome. The protein resides in the nucleus. It is found in the cajal body. Its subcellular location is the endosome. It carries out the reaction L-seryl-[protein] + ATP = O-phospho-L-seryl-[protein] + ADP + H(+). It catalyses the reaction L-threonyl-[protein] + ATP = O-phospho-L-threonyl-[protein] + ADP + H(+). With respect to regulation, phosphorylation at Thr-14 or Tyr-15 inactivates the enzyme, while phosphorylation at Thr-160 activates it. Stimulated by MYC. Inactivated by CDKN1A (p21). Its function is as follows. Serine/threonine-protein kinase involved in the control of the cell cycle; essential for meiosis, but dispensable for mitosis. Phosphorylates CABLES1, CTNNB1, CDK2AP2, ERCC6, NBN, USP37, p53/TP53, NPM1, CDK7, RB1, BRCA2, MYC, NPAT, EZH2. Triggers duplication of centrosomes and DNA. Acts at the G1-S transition to promote the E2F transcriptional program and the initiation of DNA synthesis, and modulates G2 progression; controls the timing of entry into mitosis/meiosis by controlling the subsequent activation of cyclin B/CDK1 by phosphorylation, and coordinates the activation of cyclin B/CDK1 at the centrosome and in the nucleus. Crucial role in orchestrating a fine balance between cellular proliferation, cell death, and DNA repair in embryonic stem cells (ESCs). Activity of CDK2 is maximal during S phase and G2; activated by interaction with cyclin E during the early stages of DNA synthesis to permit G1-S transition, and subsequently activated by cyclin A2 (cyclin A1 in germ cells) during the late stages of DNA replication to drive the transition from S phase to mitosis, the G2 phase. EZH2 phosphorylation promotes H3K27me3 maintenance and epigenetic gene silencing. Cyclin E/CDK2 prevents oxidative stress-mediated Ras-induced senescence by phosphorylating MYC. Involved in G1-S phase DNA damage checkpoint that prevents cells with damaged DNA from initiating mitosis; regulates homologous recombination-dependent repair by phosphorylating BRCA2, this phosphorylation is low in S phase when recombination is active, but increases as cells progress towards mitosis. In response to DNA damage, double-strand break repair by homologous recombination a reduction of CDK2-mediated BRCA2 phosphorylation. Involved in regulation of telomere repair by mediating phosphorylation of NBN. Phosphorylation of RB1 disturbs its interaction with E2F1. NPM1 phosphorylation by cyclin E/CDK2 promotes its dissociation from unduplicated centrosomes, thus initiating centrosome duplication. Cyclin E/CDK2-mediated phosphorylation of NPAT at G1-S transition and until prophase stimulates the NPAT-mediated activation of histone gene transcription during S phase. Required for vitamin D-mediated growth inhibition by being itself inactivated. Involved in the nitric oxide- (NO) mediated signaling in a nitrosylation/activation-dependent manner. USP37 is activated by phosphorylation and thus triggers G1-S transition. CTNNB1 phosphorylation regulates insulin internalization. Phosphorylates FOXP3 and negatively regulates its transcriptional activity and protein stability. Phosphorylates ERCC6 which is essential for its chromatin remodeling activity at DNA double-strand breaks. Acts as a regulator of the phosphatidylinositol 3-kinase/protein kinase B signal transduction by mediating phosphorylation of the C-terminus of protein kinase B (PKB/AKT1 and PKB/AKT2), promoting its activation. The polypeptide is Cyclin-dependent kinase 2 (Cdk2) (Rattus norvegicus (Rat)).